A 163-amino-acid chain; its full sequence is Small ribosomal subunit protein uS9 (163 aa).

Residues 1–41 are disordered; it reads MAENTNDSAVLETEEELTSYTTETNAGAGTGTSTIAPGYGT. Residues 18-38 show a composition bias toward low complexity; that stretch reads TSYTTETNAGAGTGTSTIAPG.

This sequence belongs to the universal ribosomal protein uS9 family.

The sequence is that of Small ribosomal subunit protein uS9 from Bifidobacterium adolescentis (strain ATCC 15703 / DSM 20083 / NCTC 11814 / E194a).